The primary structure comprises 106 residues: Small ribosomal subunit protein uS10 (106 aa).

The protein belongs to the universal ribosomal protein uS10 family. Part of the 30S ribosomal subunit.

In terms of biological role, involved in the binding of tRNA to the ribosomes. This chain is Small ribosomal subunit protein uS10, found in Synechococcus sp. (strain RCC307).